Reading from the N-terminus, the 212-residue chain is tRNA(Phe) 7-((3-amino-3-carboxypropyl)-4-demethylwyosine(37)-N(4))-methyltransferase 2 (212 aa).

This sequence belongs to the TYW3 family.

It catalyses the reaction 4-demethyl-7-[(3S)-3-amino-3-carboxypropyl]wyosine(37) in tRNA(Phe) + S-adenosyl-L-methionine = 7-[(3S)-3-amino-3-carboxypropyl]wyosine(37) in tRNA(Phe) + S-adenosyl-L-homocysteine + H(+). S-adenosyl-L-methionine-dependent methyltransferase that acts as a component of the wyosine derivatives biosynthesis pathway. Probably methylates N-4 position of wybutosine-86 to produce wybutosine-72. This is tRNA(Phe) 7-((3-amino-3-carboxypropyl)-4-demethylwyosine(37)-N(4))-methyltransferase 2 from Thermococcus kodakarensis (strain ATCC BAA-918 / JCM 12380 / KOD1) (Pyrococcus kodakaraensis (strain KOD1)).